The sequence spans 105 residues: Large ribosomal subunit protein uL24 (105 aa).

This sequence belongs to the universal ribosomal protein uL24 family. In terms of assembly, part of the 50S ribosomal subunit.

Functionally, one of two assembly initiator proteins, it binds directly to the 5'-end of the 23S rRNA, where it nucleates assembly of the 50S subunit. Its function is as follows. One of the proteins that surrounds the polypeptide exit tunnel on the outside of the subunit. The chain is Large ribosomal subunit protein uL24 from Methylocella silvestris (strain DSM 15510 / CIP 108128 / LMG 27833 / NCIMB 13906 / BL2).